The primary structure comprises 78 residues: MSRICQVTGKKPMVGNTVSHANNKGKRRFLPNIQEHRFWVQSENRFITLKVSAHGMRIIDKKGIDAVLAQMRARGEKI.

This sequence belongs to the bacterial ribosomal protein bL28 family.

This Dichelobacter nodosus (strain VCS1703A) protein is Large ribosomal subunit protein bL28.